Consider the following 323-residue polypeptide: AA9 family lytic polysaccharide monooxygenase B (323 aa).

A signal peptide spans Met1–Ala18. Residues His19 and His97 each coordinate Cu(2+). A disulfide bridge connects residues Cys56 and Cys191. Residues His177 and Gln186 each coordinate O2. Tyr188 serves as a coordination point for Cu(2+). Residues Cys286–Val323 form the CBM1 domain.

It belongs to the polysaccharide monooxygenase AA9 family. It depends on Cu(2+) as a cofactor.

The protein localises to the secreted. It catalyses the reaction [(1-&gt;4)-beta-D-glucosyl]n+m + reduced acceptor + O2 = 4-dehydro-beta-D-glucosyl-[(1-&gt;4)-beta-D-glucosyl]n-1 + [(1-&gt;4)-beta-D-glucosyl]m + acceptor + H2O.. With respect to regulation, is able to utilize various natural phenolic compounds as reducing agents. Most of these reducing agents are present in plants, either free or as lignin building blocks, such as sinapic acid, or as flavonoids such as catechin and dopamine. Phenolic compounds with 1,2-benzenediol and 1,2,3-benzenetriol moieties yield the highest release of oxidized and non-oxidized glucooligosaccharides from cellulose compared to monophenols or sulfur-containing compounds. In terms of biological role, lytic polysaccharide monooxygenase (LPMO) that depolymerizes crystalline and amorphous polysaccharides via the oxidation of scissile alpha- or beta-(1-4)-glycosidic bonds, yielding C1 oxidation products. Catalysis by LPMOs requires the reduction of the active-site copper from Cu(II) to Cu(I) by a reducing agent and H(2)O(2) or O(2) as a cosubstrate. Is active on regenerated amorphous cellulose (RAC). The polypeptide is AA9 family lytic polysaccharide monooxygenase B (Thermothelomyces thermophilus (strain ATCC 42464 / BCRC 31852 / DSM 1799) (Sporotrichum thermophile)).